Consider the following 51-residue polypeptide: Small ribosomal subunit protein uS14 (51 aa).

The Zn(2+) site is built by Cys16, Cys19, Cys34, and Cys37.

Belongs to the universal ribosomal protein uS14 family. Zinc-binding uS14 subfamily. As to quaternary structure, part of the 30S ribosomal subunit. Zn(2+) serves as cofactor.

In terms of biological role, binds 16S rRNA, required for the assembly of 30S particles. The protein is Small ribosomal subunit protein uS14 of Archaeoglobus fulgidus (strain ATCC 49558 / DSM 4304 / JCM 9628 / NBRC 100126 / VC-16).